The chain runs to 246 residues: Large ribosomal subunit protein uL3 (246 aa).

Disordered regions lie at residues 140-162 (SHRS…NKKM) and 214-246 (ADVP…EENA). Position 151 is an N5-methylglutamine (glutamine 151). The span at 234-246 (EAAPEAPASEENA) shows a compositional bias: low complexity.

It belongs to the universal ribosomal protein uL3 family. As to quaternary structure, part of the 50S ribosomal subunit. Forms a cluster with proteins L14 and L19. Methylated by PrmB.

Functionally, one of the primary rRNA binding proteins, it binds directly near the 3'-end of the 23S rRNA, where it nucleates assembly of the 50S subunit. The sequence is that of Large ribosomal subunit protein uL3 from Methylorubrum extorquens (strain CM4 / NCIMB 13688) (Methylobacterium extorquens).